A 300-amino-acid polypeptide reads, in one-letter code: MNSGVRMVTRSRSRATRIASEGCREELAPREAAAEGRKSHRPVRHPRRTQKTHVAYEAANGEEGEDAEPLKVPVWEPQNWQQQLANIRIMRSKKDAPVDQLGAEHCYDASASPKVRRYQVLLSLMLSSQTKDQVTAGAMQRLRARGLTVESILQTDDDTLGRLIYPVGFWRNKVKYIKQTTAILQQRYEGDIPASVAELVALPGVGPKMAHLAMAVAWGTISGIAVDTHVHRIANRLRWTKKMTKTPEETRKNLEEWLPRVLWSEVNGLLVGFGQQICLPVHPRCQACLNKALCPAAQDL.

The transit peptide at 1–19 (MNSGVRMVTRSRSRATRIA) directs the protein to the mitochondrion. The interval 1 to 53 (MNSGVRMVTRSRSRATRIASEGCREELAPREAAAEGRKSHRPVRHPRRTQKTH) is disordered. Over residues 22–37 (GCREELAPREAAAEGR) the composition is skewed to basic and acidic residues. Residues 38–51 (KSHRPVRHPRRTQK) show a composition bias toward basic residues. The 25-residue stretch at 187–211 (RYEGDIPASVAELVALPGVGPKMAH) folds into the HhH domain. Residue Lys208 is the Nucleophile; for N-glycosylase activity of the active site. [4Fe-4S] cluster-binding residues include Cys278, Cys285, Cys288, and Cys294.

The protein belongs to the Nth/MutY family. As to quaternary structure, interacts with YBX1. Interacts with ERCC5/XPG; the interaction stimulates NTHL1 activity and NTHL1 binding to its DNA substrate. Requires [4Fe-4S] cluster as cofactor. Ubiquitinated by TRIM26; leading to proteasomal degradation. As to expression, widely expressed.

It is found in the nucleus. It localises to the mitochondrion. The catalysed reaction is 2'-deoxyribonucleotide-(2'-deoxyribose 5'-phosphate)-2'-deoxyribonucleotide-DNA = a 3'-end 2'-deoxyribonucleotide-(2,3-dehydro-2,3-deoxyribose 5'-phosphate)-DNA + a 5'-end 5'-phospho-2'-deoxyribonucleoside-DNA + H(+). In terms of biological role, bifunctional DNA N-glycosylase with associated apurinic/apyrimidinic (AP) lyase function that catalyzes the first step in base excision repair (BER), the primary repair pathway for the repair of oxidative DNA damage. The DNA N-glycosylase activity releases the damaged DNA base from DNA by cleaving the N-glycosidic bond, leaving an AP site. The AP lyase activity cleaves the phosphodiester bond 3' to the AP site by a beta-elimination. Primarily recognizes and repairs oxidative base damage of pyrimidines. This chain is Endonuclease III-like protein 1 (Nthl1), found in Mus musculus (Mouse).